Here is a 266-residue protein sequence, read N- to C-terminus: uncharacterized protein (266 aa).

Helical transmembrane passes span 9-29 (IFIIFLSFLMIVLSITSIELP), 79-99 (GIMTCMGINILSLVIILINPF), 122-142 (LSVMIVIFYILSTTIGLMLSG), and 193-213 (GWYLSIVLLFLSLILAVMVFI).

The protein resides in the membrane. This is an uncharacterized protein from Dictyostelium discoideum (Social amoeba).